Consider the following 413-residue polypeptide: Elongation factor 1-alpha (413 aa).

GTP contacts are provided by residues 1–7 (HVDSGKS), 77–81 (DAPGH), and 139–142 (NKMD). The tr-type G domain maps to 1–228 (HVDSGKSTTT…DAILPPARPT (228 aa)). Residues Glu287 and Glu360 each carry the 5-glutamyl glycerylphosphorylethanolamine modification.

The protein belongs to the TRAFAC class translation factor GTPase superfamily. Classic translation factor GTPase family. EF-Tu/EF-1A subfamily.

The protein localises to the cytoplasm. Its function is as follows. This protein promotes the GTP-dependent binding of aminoacyl-tRNA to the A-site of ribosomes during protein biosynthesis. The protein is Elongation factor 1-alpha of Heliocheilus albipunctella (Millet head miner).